Here is a 155-residue protein sequence, read N- to C-terminus: Ribosome maturation factor RimP (155 aa).

The protein belongs to the RimP family.

It localises to the cytoplasm. Functionally, required for maturation of 30S ribosomal subunits. The protein is Ribosome maturation factor RimP of Listeria monocytogenes serotype 4b (strain CLIP80459).